A 267-amino-acid chain; its full sequence is Tryptophan synthase alpha chain (267 aa).

Catalysis depends on proton acceptor residues E43 and D54.

It belongs to the TrpA family. In terms of assembly, tetramer of two alpha and two beta chains.

It catalyses the reaction (1S,2R)-1-C-(indol-3-yl)glycerol 3-phosphate + L-serine = D-glyceraldehyde 3-phosphate + L-tryptophan + H2O. It functions in the pathway amino-acid biosynthesis; L-tryptophan biosynthesis; L-tryptophan from chorismate: step 5/5. The alpha subunit is responsible for the aldol cleavage of indoleglycerol phosphate to indole and glyceraldehyde 3-phosphate. The chain is Tryptophan synthase alpha chain from Bacillus licheniformis (strain ATCC 14580 / DSM 13 / JCM 2505 / CCUG 7422 / NBRC 12200 / NCIMB 9375 / NCTC 10341 / NRRL NRS-1264 / Gibson 46).